The primary structure comprises 389 residues: Lipid-A-disaccharide synthase (389 aa).

It belongs to the LpxB family.

The catalysed reaction is a lipid X + a UDP-2-N,3-O-bis[(3R)-3-hydroxyacyl]-alpha-D-glucosamine = a lipid A disaccharide + UDP + H(+). It functions in the pathway bacterial outer membrane biogenesis; LPS lipid A biosynthesis. Functionally, condensation of UDP-2,3-diacylglucosamine and 2,3-diacylglucosamine-1-phosphate to form lipid A disaccharide, a precursor of lipid A, a phosphorylated glycolipid that anchors the lipopolysaccharide to the outer membrane of the cell. The polypeptide is Lipid-A-disaccharide synthase (Burkholderia cenocepacia (strain HI2424)).